The chain runs to 434 residues: [Arg8]-vasotocin receptor (434 aa).

Topologically, residues 1-27 are extracellular; it reads MGRIANQTTASNDTDPFGRNEEVAKME. N-linked (GlcNAc...) asparagine glycans are attached at residues Asn6 and Asn12. A helical membrane pass occupies residues 28-48; sequence ITVLSVTFFVAVIGNLSVLLA. Topologically, residues 49 to 67 are cytoplasmic; sequence MHNTKKKSSRMHLFIKHLS. The helical transmembrane segment at 68–88 threads the bilayer; the sequence is LADMVVAFFQVLPQLCWEITF. Topologically, residues 89-98 are extracellular; sequence RFYGPDFLCR. A disulfide bridge connects residues Cys97 and Cys176. Residues 99 to 119 form a helical membrane-spanning segment; the sequence is IVKHLQVLGMFASTYMMVMMT. The Cytoplasmic segment spans residues 120–141; the sequence is LDRYIAICHPLKTLQQPTQRAY. A helical membrane pass occupies residues 142-162; that stretch reads IMIGSTWLCSLLLSTPQYFIF. Over 163-191 the chain is Extracellular; it reads SLSEIQNGSYVYDCWGHFIEPWGIRAYIT. A helical membrane pass occupies residues 192–212; that stretch reads WITVGIFLIPVIILMICYGFI. At 213 to 257 the chain is on the cytoplasmic side; sequence CHSIWKNIKCKTMRGTRNTKDGMIGKVSVSSVTIISRAKLRTVKM. The chain crosses the membrane as a helical span at residues 258–278; that stretch reads TLVIVLAYIVCWAPFFIVQMW. Topologically, residues 279 to 295 are extracellular; the sequence is SVWDENFSWDDSENAAV. A helical transmembrane segment spans residues 296 to 316; it reads TLSALLASLNSCCNPWIYMLF. At 317–434 the chain is on the cytoplasmic side; the sequence is SGHLLYDFLR…KSSQCMSKES (118 aa).

Belongs to the G-protein coupled receptor 1 family. Vasopressin/oxytocin receptor subfamily. As to expression, expressed in pituitary, liver, gills, swim bladder and lateral line.

Its subcellular location is the cell membrane. Binds to vasotocin. Produces an induction of membrane chloride currents indicating that it is coupled to the inositol phosphate/calcium pathway. The protein is [Arg8]-vasotocin receptor of Catostomus commersonii (White sucker).